Here is an 854-residue protein sequence, read N- to C-terminus: A-kinase anchor protein 4 (854 aa).

A propeptide spanning residues 1 to 188 is cleaved from the precursor; the sequence is MMAYSDTTMM…MTAAKNTNNN (188 aa). A phosphoserine mark is found at Ser96, Ser130, Ser190, Ser213, Ser226, and Ser272. Positions 184–207 are disordered; sequence NTNNNQSPSAPPAKPPSTQRAVIS. Positions 219 to 232 are PKA-RI and PKA-RII subunit binding domain; sequence FYVNRLSSLVIQMA. A disordered region spans residues 287–323; it reads RGTGEESREGGQKSFLYSELSNKSKSGDKQMSQRESK. Positions 288-297 are enriched in basic and acidic residues; it reads GTGEESREGG. Ser300 carries the phosphoserine modification. Phosphotyrosine is present on Tyr303. Phosphoserine occurs at positions 304 and 307. Residues 311 to 323 are compositionally biased toward basic and acidic residues; that stretch reads KSGDKQMSQRESK. Residues 336-345 form a PKA-RI-alpha subunit binding domain region; the sequence is YANQVASDMM. Ser342, Ser432, Ser443, Ser445, Ser447, Ser450, Ser464, and Ser492 each carry phosphoserine. A Phosphothreonine modification is found at Thr506. Ser536, Ser581, Ser627, and Ser703 each carry phosphoserine.

It belongs to the AKAP110 family. As to quaternary structure, interacts with PRKAR1A and PRKAR2A. Interacts with ENO4. Interacts with QRICH2. In terms of processing, phosphorylated by STK33 during sperm flagella assembly. In terms of tissue distribution, testis specific; only expressed in round spermatids.

It is found in the cell projection. The protein resides in the cilium. Its subcellular location is the flagellum. Functionally, major structural component of sperm fibrous sheath. Plays a role in sperm motility. The polypeptide is A-kinase anchor protein 4 (Homo sapiens (Human)).